The sequence spans 339 residues: Homeobox protein DBX2 (339 aa).

A DNA-binding region (homeobox) is located at residues glycine 186–lysine 245. Residues valine 282–glutamine 318 form a disordered region. The segment covering arginine 290–isoleucine 303 has biased composition (basic and acidic residues).

Belongs to the H2.0 homeobox family.

It localises to the nucleus. This chain is Homeobox protein DBX2 (DBX2), found in Homo sapiens (Human).